A 280-amino-acid chain; its full sequence is Cytochrome c1 (280 aa).

An N-terminal signal peptide occupies residues 1–21 (MKKLLISAVSALVLGSGAALA). Heme c contacts are provided by Cys55, Cys58, His59, and Met205. The chain crosses the membrane as a helical span at residues 249–267 (MGLVAVVMLGLLSVMLYLT).

As to quaternary structure, the main subunits of complex b-c1 are: cytochrome b, cytochrome c1 and the Rieske protein. Post-translationally, binds 1 heme c group covalently per subunit.

It is found in the cell membrane. Its function is as follows. Component of the ubiquinol-cytochrome c reductase complex (complex III or cytochrome b-c1 complex), which is a respiratory chain that generates an electrochemical potential coupled to ATP synthesis. c1 functions as an electron donor to cytochrome c. The chain is Cytochrome c1 (petC) from Rhodobacter capsulatus (Rhodopseudomonas capsulata).